The primary structure comprises 400 residues: Probable S-adenosylmethionine synthase (400 aa).

An ATP-binding site is contributed by 135-140 (KPGSKD).

This sequence belongs to the AdoMet synthase 2 family. The cofactor is Mg(2+).

The catalysed reaction is L-methionine + ATP + H2O = S-adenosyl-L-methionine + phosphate + diphosphate. Its pathway is amino-acid biosynthesis; S-adenosyl-L-methionine biosynthesis; S-adenosyl-L-methionine from L-methionine: step 1/1. Catalyzes the formation of S-adenosylmethionine from methionine and ATP. The sequence is that of Probable S-adenosylmethionine synthase (mat) from Aquifex aeolicus (strain VF5).